The following is a 400-amino-acid chain: MTQFASPVLHSLLDTDAYKLHMQQAVFHHYYDVHVAAEFRCRGDDLLGIYADAIREQVQAMQHLRLQDDEYQWLSALPFFKADYLNWLREFRFNPEQVTVSNDNGKLDIRLSGPWREVILWEVPLLAVISEMVHRYRSPQADVAQALDTLESKLVDFSALTAGLDMSRFHLMDFGTRRRFSREVQETIVKRLQQESWFVGTSNYDLARRLSLTPMGTQAHEWFQAHQQISPDLANSQRAALAAWLEEYPDQLGIALTDCITMDAFLRDFGVEFASRYQGLRHDSGDPVEWGEKAIAHYEKLGIDPQSKTLVFSDNLDLRKAVELYRHFSSRVQLSFGIGTRLTCDIPQVKPLNIVIKLVECNGKPVAKLSDSPGKTICHDKAFVRALRKAFDLPHIKKAS.

At His220 the chain carries Phosphohistidine; by autocatalysis.

This sequence belongs to the NAPRTase family. Post-translationally, transiently phosphorylated on a His residue during the reaction cycle. Phosphorylation strongly increases the affinity for substrates and increases the rate of nicotinate D-ribonucleotide production. Dephosphorylation regenerates the low-affinity form of the enzyme, leading to product release.

It catalyses the reaction nicotinate + 5-phospho-alpha-D-ribose 1-diphosphate + ATP + H2O = nicotinate beta-D-ribonucleotide + ADP + phosphate + diphosphate. The protein operates within cofactor biosynthesis; NAD(+) biosynthesis; nicotinate D-ribonucleotide from nicotinate: step 1/1. Functionally, catalyzes the synthesis of beta-nicotinate D-ribonucleotide from nicotinate and 5-phospho-D-ribose 1-phosphate at the expense of ATP. The polypeptide is Nicotinate phosphoribosyltransferase (Escherichia coli (strain K12 / MC4100 / BW2952)).